The following is a 90-amino-acid chain: MTVKQTVEITNKLGMHARPAMKLFELMQGFDAEVLLRNDEGTEAEANSVIALLMLDSAKGRQIEVEATGPQEEEALAAVIALFNSGFDED.

The 89-residue stretch at 2–90 (TVKQTVEITN…ALFNSGFDED (89 aa)) folds into the HPr domain. His-16 (pros-phosphohistidine intermediate) is an active-site residue.

Belongs to the HPr family.

It localises to the cytoplasm. In terms of biological role, component of the phosphoenolpyruvate-dependent nitrogen-metabolic phosphotransferase system (nitrogen-metabolic PTS), that seems to be involved in regulating nitrogen metabolism. The phosphoryl group from phosphoenolpyruvate (PEP) is transferred to the phosphoryl carrier protein NPr by enzyme I-Ntr. Phospho-NPr then transfers it to EIIA-Ntr. Could function in the transcriptional regulation of sigma-54 dependent operons in conjunction with the NPr (PtsO) and EIIA-Ntr (PtsN) proteins. The polypeptide is Phosphocarrier protein NPr (ptsO) (Escherichia coli O157:H7).